The chain runs to 338 residues: UDP-glucose 4-epimerase (338 aa).

NAD(+) is bound by residues 11–12, 31–36, 58–59, 80–84, Asn-99, Ser-124, Tyr-149, Lys-153, and Phe-178; these read YI, DNLCNS, DI, and FAGLK. Positions 124 and 149 each coordinate substrate. Residue Tyr-149 is the Proton acceptor of the active site. Substrate is bound by residues Asn-179, 199–200, 216–218, Arg-231, 292–295, and Tyr-299; these read NL, AVF, and RDGD.

It belongs to the NAD(P)-dependent epimerase/dehydratase family. Homodimer. It depends on NAD(+) as a cofactor.

It catalyses the reaction UDP-alpha-D-glucose = UDP-alpha-D-galactose. The protein operates within carbohydrate metabolism; galactose metabolism. Its function is as follows. Involved in the metabolism of galactose. Catalyzes the conversion of UDP-galactose (UDP-Gal) to UDP-glucose (UDP-Glc) through a mechanism involving the transient reduction of NAD. In Salmonella typhimurium (strain LT2 / SGSC1412 / ATCC 700720), this protein is UDP-glucose 4-epimerase (galE).